The following is a 33-amino-acid chain: Mu-theraphotoxin-Osp1a (33 aa).

3 cysteine pairs are disulfide-bonded: cysteine 2–cysteine 17, cysteine 9–cysteine 22, and cysteine 16–cysteine 29.

It belongs to the neurotoxin 10 (Hwtx-1) family. As to expression, expressed by the venom gland.

The protein localises to the secreted. Functionally, voltage-gated sodium channel Nav1.7/SCN9A inhibitor. This is Mu-theraphotoxin-Osp1a from Orphnaecus sp. (strain Sibaliw/Philippines) (Tarantula spider).